Consider the following 356-residue polypeptide: Tetraacyldisaccharide 4'-kinase (356 aa).

ATP is bound at residue 67-74 (FVGGTGKT).

The protein belongs to the LpxK family.

It catalyses the reaction a lipid A disaccharide + ATP = a lipid IVA + ADP + H(+). It functions in the pathway glycolipid biosynthesis; lipid IV(A) biosynthesis; lipid IV(A) from (3R)-3-hydroxytetradecanoyl-[acyl-carrier-protein] and UDP-N-acetyl-alpha-D-glucosamine: step 6/6. In terms of biological role, transfers the gamma-phosphate of ATP to the 4'-position of a tetraacyldisaccharide 1-phosphate intermediate (termed DS-1-P) to form tetraacyldisaccharide 1,4'-bis-phosphate (lipid IVA). This chain is Tetraacyldisaccharide 4'-kinase, found in Herminiimonas arsenicoxydans.